Here is an 831-residue protein sequence, read N- to C-terminus: DNA ligase (831 aa).

NAD(+) contacts are provided by residues 34 to 38, 83 to 84, and Glu114; these read DADYD and SL. Lys116 acts as the N6-AMP-lysine intermediate in catalysis. NAD(+) is bound by residues Arg137, Glu174, Lys291, and Lys315. The Zn(2+) site is built by Cys409, Cys412, Cys427, and Cys433. One can recognise a BRCT domain in the interval 749–831; that stretch reads AHTAPLNGQS…LAFLGQYSAQ (83 aa).

Belongs to the NAD-dependent DNA ligase family. LigA subfamily. Mg(2+) is required as a cofactor. Mn(2+) serves as cofactor.

The catalysed reaction is NAD(+) + (deoxyribonucleotide)n-3'-hydroxyl + 5'-phospho-(deoxyribonucleotide)m = (deoxyribonucleotide)n+m + AMP + beta-nicotinamide D-nucleotide.. In terms of biological role, DNA ligase that catalyzes the formation of phosphodiester linkages between 5'-phosphoryl and 3'-hydroxyl groups in double-stranded DNA using NAD as a coenzyme and as the energy source for the reaction. It is essential for DNA replication and repair of damaged DNA. This chain is DNA ligase, found in Xylella fastidiosa (strain 9a5c).